The chain runs to 321 residues: tRNA-dihydrouridine synthase B (321 aa).

FMN contacts are provided by residues 16–18 (PMA) and Q70. The active-site Proton donor is C100. FMN contacts are provided by residues K139, 200–202 (NGD), and 224–225 (GR).

The protein belongs to the Dus family. DusB subfamily. Requires FMN as cofactor.

It carries out the reaction a 5,6-dihydrouridine in tRNA + NAD(+) = a uridine in tRNA + NADH + H(+). The enzyme catalyses a 5,6-dihydrouridine in tRNA + NADP(+) = a uridine in tRNA + NADPH + H(+). Functionally, catalyzes the synthesis of 5,6-dihydrouridine (D), a modified base found in the D-loop of most tRNAs, via the reduction of the C5-C6 double bond in target uridines. In Shigella flexneri, this protein is tRNA-dihydrouridine synthase B.